We begin with the raw amino-acid sequence, 246 residues long: UDP-2,3-diacylglucosamine hydrolase (246 aa).

D8, H10, D41, N79, and H114 together coordinate Mn(2+). 79–80 provides a ligand contact to substrate; it reads NR. Residues D122, S160, K164, K167, and H195 each coordinate substrate. Positions 195 and 197 each coordinate Mn(2+).

The protein belongs to the LpxH family. It depends on Mn(2+) as a cofactor.

It localises to the cell inner membrane. It catalyses the reaction UDP-2-N,3-O-bis[(3R)-3-hydroxytetradecanoyl]-alpha-D-glucosamine + H2O = 2-N,3-O-bis[(3R)-3-hydroxytetradecanoyl]-alpha-D-glucosaminyl 1-phosphate + UMP + 2 H(+). It participates in glycolipid biosynthesis; lipid IV(A) biosynthesis; lipid IV(A) from (3R)-3-hydroxytetradecanoyl-[acyl-carrier-protein] and UDP-N-acetyl-alpha-D-glucosamine: step 4/6. In terms of biological role, hydrolyzes the pyrophosphate bond of UDP-2,3-diacylglucosamine to yield 2,3-diacylglucosamine 1-phosphate (lipid X) and UMP by catalyzing the attack of water at the alpha-P atom. Involved in the biosynthesis of lipid A, a phosphorylated glycolipid that anchors the lipopolysaccharide to the outer membrane of the cell. The sequence is that of UDP-2,3-diacylglucosamine hydrolase from Tolumonas auensis (strain DSM 9187 / NBRC 110442 / TA 4).